We begin with the raw amino-acid sequence, 74 residues long: Mitochondrial import receptor subunit TOM6 homolog (74 aa).

The span at 1 to 20 (MASSGVTVSAAGSASEASEV) shows a compositional bias: low complexity. Residues 1–21 (MASSGVTVSAAGSASEASEVP) form a disordered region. The residue at position 2 (Ala-2) is an N-acetylalanine.

Belongs to the Tom6 family. As to quaternary structure, forms part of the preprotein translocase complex of the outer mitochondrial membrane (TOM complex) which consists of at least 7 different proteins (TOMM5, TOMM6, TOMM7, TOMM20, TOMM22, TOMM40 and TOMM70).

Its subcellular location is the mitochondrion outer membrane. This is Mitochondrial import receptor subunit TOM6 homolog (Tomm6) from Mus musculus (Mouse).